The following is a 705-amino-acid chain: MDENLLATAATNGVVVTWNLGKPSRNKQDQLFTEHKRTVNKVCFHPTEVYMLLSGSQDGYMKCFDLRKKDSVSTFSGQSESVRDVQFSIRDYFTFAATFENGNVQLWDIRRPDRYERMFTAHNGPVFCCDWHPEDRGWLATGGRDKMVKVWDMNTTRAKEIYCVQTIASVARVKWRPECKHHIATCSMMVDHNIYVWDVRRPFIPSAMFEEHKDVTTGIVWRHLHDPYFLLSGSKDSTLYQHIFKDASQPIDRANPEGLCYSLYGDLAFAAKESLISSDSNRKPYIGDRRHPIFFKRKLDPTEQFEYISSSSALSVFETDVESGSMDWFVHTAKQYALAGRPLAELCDHNAKVAKGLDRNQVAQTWTMLRIIYSSLGTVSSTNLNHSMGKGSTTLPLMNSFNLKDIPSGLGSESRLDRSKGESRTENILMDSSSTLINNEDNEETEGSDVPADYLLGDVEADEDDLYMMDHENPHAEEQEYSLPQEAFPLRHEIVDNPSALDHLQDKADSPHVSGNEAETVSLTPVESFSLISISHSLYENRLPSDFFNPIVRDTLLFYAEQGDVQTAVSVLIVLGDRIRKEIDEQTQEHWYTSYIDLLQRFQLWNISNEVIKLSTCRAINCLNQASTTLHINCSNCKRPMSNRGWICDRCRQCASMCAVCHHVVKGLFVWCQGCSHGGHLQHIMKWLETSSHCPAGCGHLCEYT.

WD repeat units follow at residues 1–28 (MDENLLATAATNGVVVTWNLGKPSRNKQ), 34–74 (EHKR…SVST), 77–117 (GQSE…RYER), 121–161 (AHNG…AKEI), 165–207 (QTIA…IPSA), and 211–254 (EHKD…IDRA). The C4-type zinc finger occupies 633-655 (NCSNCKRPMSNRGWICDRCRQCA). Zn(2+) is bound by residues cysteine 634, cysteine 637, cysteine 648, cysteine 651, cysteine 658, cysteine 661, cysteine 672, cysteine 675, histidine 677, histidine 680, histidine 683, cysteine 694, cysteine 698, histidine 700, and cysteine 702. The RING-type; atypical zinc-finger motif lies at 656 to 705 (SMCAVCHHVVKGLFVWCQGCSHGGHLQHIMKWLETSSHCPAGCGHLCEYT).

Belongs to the WD repeat WDR24 family. As to quaternary structure, component of the GATOR2 subcomplex, composed of MIOS, SEC13, SEH1L, WDR24 and WDR59. The GATOR2 complex interacts with CASTOR1 and CASTOR2; the interaction is negatively regulated by arginine. The GATOR2 complex interacts with SESN1, SESN2 and SESN3; the interaction is negatively regulated by amino acids.

Its subcellular location is the lysosome membrane. It catalyses the reaction S-ubiquitinyl-[E2 ubiquitin-conjugating enzyme]-L-cysteine + [acceptor protein]-L-lysine = [E2 ubiquitin-conjugating enzyme]-L-cysteine + N(6)-ubiquitinyl-[acceptor protein]-L-lysine.. It participates in protein modification; protein ubiquitination. Its activity is regulated as follows. The GATOR2 complex is negatively regulated by the upstream amino acid sensors CASTOR1 and SESN2, which sequester the GATOR2 complex in absence of amino acids. In the presence of abundant amino acids, GATOR2 is released from CASTOR1 and SESN2 and activated. Functionally, catalytic component of the GATOR2 complex, a multiprotein complex that acts as an activator of the amino acid-sensing branch of the mTORC1 signaling pathway. The GATOR2 complex indirectly activates mTORC1 through the inhibition of the GATOR1 subcomplex. GATOR2 probably acts as an E3 ubiquitin-protein ligase toward GATOR1. In the presence of abundant amino acids, the GATOR2 complex mediates ubiquitination of the NPRL2 core component of the GATOR1 complex, leading to GATOR1 inactivation. In the absence of amino acids, GATOR2 is inhibited, activating the GATOR1 complex. In addition to its role in regulation of the mTORC1 complex, promotes the acidification of lysosomes and facilitates autophagic flux. Within the GATOR2 complex, WDR24 constitutes the catalytic subunit that mediates 'Lys-6'-linked ubiquitination of NPRL2. This chain is GATOR2 complex protein WDR24, found in Gallus gallus (Chicken).